The sequence spans 248 residues: Stress-related protein (248 aa).

It belongs to the REF/SRPP family.

This is Stress-related protein (SRP) from Vitis riparia (Frost grape).